A 926-amino-acid polypeptide reads, in one-letter code: Up-regulator of cell proliferation (926 aa).

Serine 3 is modified (phosphoserine). In terms of domain architecture, VLIG-type G spans 689–924 (RSRLVVLSAL…NIQQLIELLR (236 aa)).

It belongs to the TRAFAC class dynamin-like GTPase superfamily. Very large inducible GTPase (VLIG) family.

It is found in the cytoplasm. Its subcellular location is the nucleus. Functionally, may be involved in cell cycle progression through the regulation of cyclin D1 expression. The protein is Up-regulator of cell proliferation (Urgcp) of Mus musculus (Mouse).